Here is a 297-residue protein sequence, read N- to C-terminus: Thiosulfate sulfurtransferase (297 aa).

Lys14 is modified (N6-acetyllysine; alternate). Lys14 bears the N6-succinyllysine; alternate mark. Residues 25–143 form the Rhodanese 1 domain; it reads VGPGLRVLDA…WLKEGHPVTS (119 aa). An O-linked (GlcNAc) serine glycan is attached at Ser35. Ser38 carries the phosphoserine modification. N6-acetyllysine; alternate is present on Lys136. N6-succinyllysine; alternate is present on Lys136. The tract at residues 144–159 is hinge; it reads EPSRPEPAIFKATLNR. Lys163 is modified (N6-acetyllysine). Positions 173 to 288 constitute a Rhodanese 2 domain; the sequence is ESKRFQLVDS…WFHRAPPETW (116 aa). Lys175 carries the post-translational modification N6-acetyllysine; alternate. Residue Lys175 is modified to N6-succinyllysine; alternate. Substrate is bound at residue Arg187. Lys224 carries the N6-acetyllysine; alternate modification. Lys224 carries the post-translational modification N6-succinyllysine; alternate. Lys236 carries the post-translational modification N6-acetyllysine. An N6-acetyllysine; alternate modification is found at Lys237. Residue Lys237 is modified to N6-succinyllysine; alternate. The active-site Cysteine persulfide intermediate is Cys248. Substrate is bound at residue Lys250.

As to quaternary structure, monomer. Expressed in numerous tissues.

The protein resides in the mitochondrion matrix. The enzyme catalyses thiosulfate + hydrogen cyanide = thiocyanate + sulfite + 2 H(+). Its function is as follows. Together with MRPL18, acts as a mitochondrial import factor for the cytosolic 5S rRNA. Only the nascent unfolded cytoplasmic form is able to bind to the 5S rRNA. Formation of iron-sulfur complexes and cyanide detoxification. Binds molecular oxygen and sulfur. The protein is Thiosulfate sulfurtransferase (TST) of Bos taurus (Bovine).